Consider the following 218-residue polypeptide: Acetyl- and succinyl-CoA transferase MT0822 (218 aa).

Positions 32-188 (DTILEGVHDP…EALLFRLTRD (157 aa)) constitute an N-acetyltransferase domain. Substrate is bound by residues glutamine 94, 109-113 (SGSWL), 119-124 (GHGYGT), 145-151 (SRSFVDN), and arginine 160.

Dimer of dimers.

The enzyme catalyses L-lysyl-[protein] + acetyl-CoA = N(6)-acetyl-L-lysyl-[protein] + CoA + H(+). It carries out the reaction succinyl-CoA + L-lysyl-[protein] = N(6)-succinyl-L-lysyl-[protein] + CoA + H(+). Functionally, acetylates and succinylates nucleoid-associated, DNA-binding protein HupB. The polypeptide is Acetyl- and succinyl-CoA transferase MT0822 (Mycobacterium tuberculosis (strain CDC 1551 / Oshkosh)).